We begin with the raw amino-acid sequence, 354 residues long: Ornithine carbamoyltransferase, catabolic (354 aa).

Carbamoyl phosphate-binding positions include 67-70 (STRT), glutamine 94, arginine 118, and 145-148 (HPTQ). Residues asparagine 177, aspartate 241, and 245 to 246 (SM) contribute to the L-ornithine site. Carbamoyl phosphate contacts are provided by residues 284–285 (CL) and arginine 329.

It belongs to the aspartate/ornithine carbamoyltransferase superfamily. OTCase family.

The protein localises to the cytoplasm. The catalysed reaction is carbamoyl phosphate + L-ornithine = L-citrulline + phosphate + H(+). Its pathway is amino-acid degradation; L-arginine degradation via ADI pathway; carbamoyl phosphate from L-arginine: step 2/2. Its function is as follows. Reversibly catalyzes the transfer of the carbamoyl group from carbamoyl phosphate (CP) to the N(epsilon) atom of ornithine (ORN) to produce L-citrulline. The sequence is that of Ornithine carbamoyltransferase, catabolic (arcB) from Lactococcus lactis subsp. cremoris (strain MG1363).